The primary structure comprises 2193 residues: Protein sidekick-1 (2193 aa).

Over residues 1-23 (MARARPSVAGGGVAAPPERAGPG) the composition is skewed to low complexity. Positions 1-56 (MARARPSVAGGGVAAPPERAGPGRPRRSRTGHHCDPECPGLRAAPRTPGPGAGRRA) are disordered. Ig-like C2-type domains follow at residues 86-168 (PYFK…SEIQ), 173-259 (GNFM…SPFI), 275-363 (PIIV…AFLS), 368-458 (PYFT…LDVT), and 462-551 (PAFT…AMLT). Cysteine 108 and cysteine 151 are disulfide-bonded. 3 N-linked (GlcNAc...) asparagine glycosylation sites follow: asparagine 123, asparagine 253, and asparagine 283. Intrachain disulfides connect cysteine 297–cysteine 344, cysteine 390–cysteine 440, and cysteine 483–cysteine 535. N-linked (GlcNAc...) asparagine glycosylation is found at asparagine 532, asparagine 545, and asparagine 554. The Ig-like C2-type 6 domain occupies 556–645 (TSIVHPPEDR…GSDSRTARLE (90 aa)). Cysteine 577 and cysteine 629 are disulfide-bonded. Fibronectin type-III domains lie at 652-748 (PPQN…LPEE), 753-849 (PPKN…TLQG), 854-952 (PPQN…THED), 956-1050 (AVGH…VPPD), 1054-1153 (APSN…TLQA), 1158-1256 (APTS…TRES), 1261-1358 (APEN…TKDD), 1362-1456 (PPVR…TEKR), 1461-1558 (PPRE…TLQD), 1563-1681 (PPGS…VGEA), 1686-1782 (APQN…THQA), 1786-1881 (PPSF…AGPA), and 1884-1982 (SPGS…SAQA). N-linked (GlcNAc...) asparagine glycosylation is found at asparagine 764, asparagine 803, asparagine 864, asparagine 997, and asparagine 1006. Residues asparagine 1264 and asparagine 1315 are each glycosylated (N-linked (GlcNAc...) asparagine). Residues asparagine 1636, asparagine 1730, asparagine 1801, and asparagine 1875 are each glycosylated (N-linked (GlcNAc...) asparagine). Residues 1992–2012 (FLLVMALSSLLLILLVVFVLV) form a helical membrane-spanning segment. At 2013 to 2193 (LHGQSKKYKS…APLTGFSSFV (181 aa)) the chain is on the cytoplasmic side. Residues 2057-2080 (STFSKKNGTRSPPRPSPGGLHYSD) form a disordered region. Residues 2187 to 2193 (TGFSSFV) carry the PDZ-binding motif.

This sequence belongs to the sidekick family. Homodimer; mediates homophilic interactions to promote cell adhesion. Interacts (via PDZ-binding motif) with MAGI1, MAGI2, DLG2, DLG3 and DLG4. As to quaternary structure, does not mediate homophilic interactions. In terms of tissue distribution, expressed by non-overlapping subsets of retinal neurons. Sdk1 and Sdk2 are expressed in non-overlapping subsets of interneurons and retinal ganglion cells (RGCs) that form synapses in distinct inner plexiform layer (IPL) sublaminae (at protein level).

Its subcellular location is the cell membrane. The protein resides in the synapse. In terms of biological role, adhesion molecule that promotes lamina-specific synaptic connections in the retina. Expressed in specific subsets of interneurons and retinal ganglion cells (RGCs) and promotes synaptic connectivity via homophilic interactions. The protein is Protein sidekick-1 of Mus musculus (Mouse).